The following is a 244-amino-acid chain: Mono-ADP-ribosyltransferase C3 (244 aa).

Residues 1 to 40 (MKGIRKSILCLVLSAGVIAPVTTSIVQSPQKCYACTVDKG) form the signal peptide. The 201-residue stretch at 44–244 (DTFTEFTNVE…QIMITAMIFK (201 aa)) folds into the TR mART core domain. Residues T80, N87, R91, 128–131 (RGDD), and 167–169 (RTE) each bind NAD(+). Residue R128 is part of the active site. The active site involves S174. NAD(+) contacts are provided by residues 182–185 (FGGR) and 211–213 (QLE). The active site involves E213.

The protein to exoenzymes 3 of C.limosum and C.botulinum D phage, and to S.aureus ediN. As to quaternary structure, monomer.

The protein resides in the secreted. The catalysed reaction is L-asparaginyl-[protein] + NAD(+) = N(4)-(ADP-D-ribosyl)-L-asparaginyl-[protein] + nicotinamide + H(+). Functionally, ADP-ribosylates eukaryotic Rho and Rac proteins on an asparagine residue. The protein is Mono-ADP-ribosyltransferase C3 of Clostridium botulinum C phage (Clostridium botulinum C bacteriophage).